The following is a 496-amino-acid chain: Proline--tRNA ligase (496 aa).

The protein belongs to the class-II aminoacyl-tRNA synthetase family. ProS type 3 subfamily. In terms of assembly, homodimer.

Its subcellular location is the cytoplasm. The catalysed reaction is tRNA(Pro) + L-proline + ATP = L-prolyl-tRNA(Pro) + AMP + diphosphate. Its function is as follows. Catalyzes the attachment of proline to tRNA(Pro) in a two-step reaction: proline is first activated by ATP to form Pro-AMP and then transferred to the acceptor end of tRNA(Pro). The protein is Proline--tRNA ligase of Phocaeicola vulgatus (strain ATCC 8482 / DSM 1447 / JCM 5826 / CCUG 4940 / NBRC 14291 / NCTC 11154) (Bacteroides vulgatus).